Consider the following 208-residue polypeptide: Glycerol-3-phosphate acyltransferase (208 aa).

Helical transmembrane passes span 3-23, 55-75, 81-101, 113-133, and 155-175; these read IIIM…VIIG, IVMV…TLLF, YTLL…YIGF, ILLA…LLLV, and IFYY…LFIF.

The protein belongs to the PlsY family. As to quaternary structure, probably interacts with PlsX.

Its subcellular location is the cell membrane. The enzyme catalyses an acyl phosphate + sn-glycerol 3-phosphate = a 1-acyl-sn-glycero-3-phosphate + phosphate. Its pathway is lipid metabolism; phospholipid metabolism. In terms of biological role, catalyzes the transfer of an acyl group from acyl-phosphate (acyl-PO(4)) to glycerol-3-phosphate (G3P) to form lysophosphatidic acid (LPA). This enzyme utilizes acyl-phosphate as fatty acyl donor, but not acyl-CoA or acyl-ACP. In Lactiplantibacillus plantarum (strain ATCC BAA-793 / NCIMB 8826 / WCFS1) (Lactobacillus plantarum), this protein is Glycerol-3-phosphate acyltransferase.